Here is an 85-residue protein sequence, read N- to C-terminus: Small ribosomal subunit protein bS18 (85 aa).

This sequence belongs to the bacterial ribosomal protein bS18 family. In terms of assembly, part of the 30S ribosomal subunit. Forms a tight heterodimer with protein bS6.

Binds as a heterodimer with protein bS6 to the central domain of the 16S rRNA, where it helps stabilize the platform of the 30S subunit. This is Small ribosomal subunit protein bS18 from Hamiltonella defensa subsp. Acyrthosiphon pisum (strain 5AT).